The primary structure comprises 132 residues: Small ribosomal subunit protein uS8 (132 aa).

This sequence belongs to the universal ribosomal protein uS8 family. In terms of assembly, part of the 30S ribosomal subunit. Contacts proteins S5 and S12.

One of the primary rRNA binding proteins, it binds directly to 16S rRNA central domain where it helps coordinate assembly of the platform of the 30S subunit. This Geobacter sp. (strain M21) protein is Small ribosomal subunit protein uS8.